The chain runs to 155 residues: Small ribosomal subunit protein uS13 (155 aa).

The segment covering 135–145 (QHTKTTGRRGR) has biased composition (basic residues). Residues 135-155 (QHTKTTGRRGRTVGVSRTKGA) are disordered. A compositionally biased stretch (low complexity) spans 146–155 (TVGVSRTKGA).

It belongs to the universal ribosomal protein uS13 family. In terms of assembly, component of the small ribosomal subunit.

It is found in the cytoplasm. In terms of biological role, component of the small ribosomal subunit. The ribosome is a large ribonucleoprotein complex responsible for the synthesis of proteins in the cell. This Entamoeba histolytica (strain ATCC 30459 / HM-1:IMSS / ABRM) protein is Small ribosomal subunit protein uS13 (RPS18).